A 151-amino-acid polypeptide reads, in one-letter code: Prefoldin subunit 5 (151 aa).

Positions 15-35 (IDQLKALKEQADLEVNLLQDS) form a coiled coil.

This sequence belongs to the prefoldin subunit alpha family. Heterohexamer of two PFD-alpha type and four PFD-beta type subunits forming prefoldin co-chaperone complex. Interacts with PFD6. Binds to the DELLA protein GAI.

The protein localises to the cytoplasm. It localises to the nucleus. Its function is as follows. Binds specifically to cytosolic chaperonin (c-CPN) and transfers target proteins to it. Binds to nascent polypeptide chain and promotes folding in an environment in which there are many competing pathways for nonnative proteins. Together with other chaperonins, contribute to the regulation of gene expression by modulating the spliceosome function on pre-mRNA splicing post-transcriptionally by acting as a co-chaperone of Hsp90 to control levels of LSM8. Required for the biogenesis of tubulins and for subsequent microtubules (MTs) organization and dynamicity. Necessary for tolerance to NaCl salt stress. Involved in the process leading to microtubules dissociation in response to gibberellic acid (GA) probably due to the DELLA proteins-mediated translocation of the prefoldin co-chaperone complex from the cytoplasm to the nucleus. Prevents cold acclimation (e.g. 7 days at 4 degrees Celsius) in a DELLA proteins-dependent manner by promoting nuclear proteasome-mediated HY5 degradation, thus modulating the expression of several genes and reducing anthocyanin biosynthesis, but seems not involved in constitutive freezing tolerance. Contributes to the GA-dependent regulation of PIN2 trafficking at the plasma membrane, thus influencing auxin flux. The sequence is that of Prefoldin subunit 5 from Arabidopsis thaliana (Mouse-ear cress).